The chain runs to 450 residues: Exodeoxyribonuclease 7 large subunit (450 aa).

It belongs to the XseA family. Heterooligomer composed of large and small subunits.

It is found in the cytoplasm. The catalysed reaction is Exonucleolytic cleavage in either 5'- to 3'- or 3'- to 5'-direction to yield nucleoside 5'-phosphates.. Bidirectionally degrades single-stranded DNA into large acid-insoluble oligonucleotides, which are then degraded further into small acid-soluble oligonucleotides. This Listeria welshimeri serovar 6b (strain ATCC 35897 / DSM 20650 / CCUG 15529 / CIP 8149 / NCTC 11857 / SLCC 5334 / V8) protein is Exodeoxyribonuclease 7 large subunit.